A 156-amino-acid chain; its full sequence is Transcription elongation factor GreA (156 aa).

A coiled-coil region spans residues 46 to 73 (AEYHAAREKQSFIEGRIKELEALLSLAE).

The protein belongs to the GreA/GreB family.

In terms of biological role, necessary for efficient RNA polymerase transcription elongation past template-encoded arresting sites. The arresting sites in DNA have the property of trapping a certain fraction of elongating RNA polymerases that pass through, resulting in locked ternary complexes. Cleavage of the nascent transcript by cleavage factors such as GreA or GreB allows the resumption of elongation from the new 3'terminus. GreA releases sequences of 2 to 3 nucleotides. This chain is Transcription elongation factor GreA, found in Cereibacter sphaeroides (strain ATCC 17025 / ATH 2.4.3) (Rhodobacter sphaeroides).